A 2115-amino-acid polypeptide reads, in one-letter code: Nuclear mitotic apparatus protein 1 (2115 aa).

Residues 1-212 (MTLHATRGAA…SPMGDILQTP (212 aa)) form a head (Globular) region. A Phosphoserine modification is found at Ser-162. Thr-163 is modified (phosphothreonine). Ser-169 and Ser-203 each carry phosphoserine. Position 211 is a phosphothreonine (Thr-211). Residues 213-1699 (QFQMRRLKKQ…ADQQLRDLGK (1487 aa)) adopt a coiled-coil conformation. Ser-271 carries the phosphoserine modification. N6-acetyllysine is present on Lys-379. Phosphoserine is present on residues Ser-388 and Ser-395. A compositionally biased stretch (low complexity) spans 549–560 (LRHQVEQLSSSL). 2 disordered regions span residues 549–593 (LRHQ…EERE) and 746–766 (LVEQ…GRKG). Positions 561–581 (KQKEQQLKEVAEKQEATRQDH) are enriched in basic and acidic residues. Ser-820 is subject to Phosphoserine. Lys-891 is modified (N6-acetyllysine). Composition is skewed to basic and acidic residues over residues 926–950 (AGEQ…RQPE) and 996–1013 (QEER…TQER). 2 disordered regions span residues 926 to 958 (AGEQ…QQGR) and 988 to 1013 (LMES…TQER). Thr-1047 is modified (phosphothreonine; by PLK1). A compositionally biased stretch (basic and acidic residues) spans 1090 to 1102 (LKEQLAKKEKEHA). Disordered regions lie at residues 1090 to 1225 (LKEQ…RKNS) and 1275 to 1296 (ETAS…EVQS). Composition is skewed to low complexity over residues 1103 to 1112 (SGSGAQSEAA) and 1133 to 1142 (EQQCQKQQEQ). Basic and acidic residues predominate over residues 1145 to 1163 (SLERSLEAERASRAERDSA). The residue at position 1187 (Ser-1187) is a Phosphoserine. Basic and acidic residues predominate over residues 1198–1224 (KVQDHSKAEDEWKAQVARGRQEAERKN). Position 1225 is a phosphoserine (Ser-1225). The span at 1283–1296 (AAERSSALREEVQS) shows a compositional bias: basic and acidic residues. N6-acetyllysine is present on Lys-1511. The residue at position 1601 (Ser-1601) is a Phosphoserine. Lys-1699 participates in a covalent cross-link: Glycyl lysine isopeptide (Lys-Gly) (interchain with G-Cter in SUMO2). The segment at 1699–1876 (KFQVATDALK…NSALLSLPGY (178 aa)) is membrane-binding domain 1. The interval 1700–2115 (FQVATDALKS…TPRAKGKAKH (416 aa)) is tail (Globular). A phosphoserine mark is found at Ser-1721, Ser-1724, and Ser-1728. The segment at 1734 to 1761 (PLSITSKLPRTQPDGTSVPGEPASPISQ) is disordered. The span at 1735 to 1748 (LSITSKLPRTQPDG) shows a compositional bias: polar residues. The Tankyrase-binding domain signature appears at 1742 to 1748 (PRTQPDG). Residues Ser-1757 and Ser-1760 each carry the phosphoserine modification. Lys-1766 participates in a covalent cross-link: Glycyl lysine isopeptide (Lys-Gly) (interchain with G-Cter in SUMO1); alternate. A Glycyl lysine isopeptide (Lys-Gly) (interchain with G-Cter in SUMO2); alternate cross-link involves residue Lys-1766. Ser-1769 and Ser-1772 each carry phosphoserine; by PLK1. Tyr-1774 bears the Phosphotyrosine mark. Phosphothreonine is present on Thr-1776. Residue Ser-1788 is modified to Phosphoserine. The interval 1788 to 1810 (SSLDSLGDVFLDSGRKTRSARRR) is 4.1-binding domain. A Phosphoserine; by PLK1 modification is found at Ser-1789. Phosphoserine is present on residues Ser-1792 and Ser-1800. Thr-1804 bears the Phosphothreonine mark. Lys-1822 is covalently cross-linked (Glycyl lysine isopeptide (Lys-Gly) (interchain with G-Cter in SUMO2)). Disordered regions lie at residues 1826–1901 (EEPD…GRNS) and 1955–2115 (EMKT…KAKH). Residues Ser-1830 and Ser-1833 each carry the phosphoserine modification. Polar residues predominate over residues 1830-1857 (SANSSFYSTRSAPASQASLRATSSTQSL). Ser-1834 bears the Phosphoserine; by PLK1 mark. Tyr-1836 carries the phosphotyrosine modification. A Phosphoserine modification is found at Ser-1840. Residue Ser-1844 is modified to Phosphoserine; alternate. Ser-1844 carries an O-linked (GlcNAc) serine; alternate glycan. Phosphoserine occurs at positions 1862 and 1887. Positions 1879–1891 (TTRSSARRSQAGV) are enriched in polar residues. The tubulin-binding domain stretch occupies residues 1882–1985 (SSARRSQAGV…AEGTGITTRQ (104 aa)). Positions 1892 to 1926 (SSGAPPGRNSFYMGTCQDEPEQLDDWNRIAELQQR) are GPSM2-binding domain. Residues 1955 to 1966 (EMKTGDPQETLR) are compositionally biased toward basic and acidic residues. Ser-1969 is subject to Phosphoserine. The segment at 1981-2060 (ITTRQQRKRV…SILNTPKKLG (80 aa)) is membrane-binding domain 2. Residues 1984–1989 (RQQRKR) carry the Nuclear localization signal motif. Ser-1991 is modified (phosphoserine). Residue Thr-2000 is modified to Phosphothreonine. Ser-2003 is modified (phosphoserine). A Phosphothreonine; by CDK1 modification is found at Thr-2015. The segment covering 2015-2032 (TPRDRHEGRKQSTTEAQK) has biased composition (basic and acidic residues). Ser-2047 carries the post-translational modification Phosphoserine. A Phosphothreonine; by CDK1 modification is found at Thr-2055. 2 positions are modified to phosphoserine: Ser-2062 and Ser-2077. Ser-2087 carries the post-translational modification Phosphoserine; by CDK1. Residues 2089–2108 (RIATTTASAATAAAIGATPR) are compositionally biased toward low complexity. Thr-2106 is subject to Phosphothreonine; by CDK1.

As to quaternary structure, homodimer. Also forms multiarm oligomers by association of C-terminal tail domains, oligomers may further assemble to form a hexagonal nuclear lattice-like network. Associates with the dynein-dynactin complex; this association promotes the transport and accumulation of NUMA1 at the mitotic spindle poles that is inhibited by the BRISC complex in a PLK1-dependent manner. Part of a spindle orientation complex at least composed of GNAI1, GPSM2 and NUMA1. Interacts (via C-terminus) with microtubules (MTs); this interaction is direct and promotes both MT bundle formation and stability in a dynein-dynactin complex- and CDK1-independent manner. Interacts with EPB41 and EPB41L2; these interactions are negatively regulated by CDK1 during metaphase and are important for anaphase-specific localization of NUMA1 in symmetrically dividing cells. Interacts (via C-terminus) with GPSM2 (via TPR repeats); this interaction is direct, prevented by competitive binding of INSC, is inhibited in a PLK1-dependent manner, blocks the association of NUMA1 with MTs and inhibits NUMA1-induced MT bundle formation, prevents the association of NUMA1 with SPAG5, induces mitotic spindle pole localization of GPSM2, both metaphase cell cortex localization of NUMA1 and mitotic spindle organization. Does not interact with GPSM2 during anaphase. Interacts (via C-terminus) with the nuclear importin alpha/importin beta receptor; this interaction is inhibited by RanGTP. Interacts (via C-terminus) with KPNB1; this interaction is inhibited by RanGTP and the BRISC complex. Interacts with ABRAXAS2 and the BRISC complex; these interactions regulate mitotic spindle assembly. Interacts (via N-terminal end of the coiled-coil domain) with RAE1; this interaction promotes mitotic spindle formation. Interacts (via C-terminus) with SPAG5 (via C-terminus); this interaction promotes the recruitment of SPAG5 to the MTs at spindle poles in a dynein-dynactin-dependent manner and regulates mitotic spindle organization and proper chromosome alignment during mitosis. Interacts with TNKS; this interaction occurs at the onset of mitosis. Interacts with TNKS2. Interacts with tubulin. Interacts with KHDC3L (via C-terminus). Post-translationally, phosphorylation and dephosphorylation on Thr-2055 regulates the extent of cortical NUMA1 and the dynein-dynactin complex localization during mitotic metaphase and anaphase. In metaphase, phosphorylation on Thr-2055 occurs in a kinase CDK1-dependent manner; this phosphorylation maintains low levels of cortical dynein-dynactin complex at metaphase, and hence proper spindle positioning. In anaphase, dephosphorylated on Thr-2055 by phosphatase PPP2CA; this dephosphorylation stimulates its membrane association and with the dynein-dynactin complex its enrichment at the cell cortex, and hence robust spindle elongation. Probably also phosphorylated on Thr-2015 and Ser-2087 by CDK1; these phosphorylations may regulate its cell cortex recruitment during metaphase and anaphase. Phosphorylated on Thr-1047, Ser-1769, Ser-1772, Ser-1789 and Ser-1834 by PLK1; these phosphorylations induce cortical dynein-dynactin complex dissociation from the NUMA1-GPSM2 complex and negatively regulates cortical dynein-dynactin complex localization. In terms of processing, ADP-ribosylated by TNKS at the onset of mitosis; ADP-ribosylation is not required for its localization to spindle poles. O-glycosylated during cytokinesis at sites identical or close to phosphorylation sites, this interferes with the phosphorylation status. Post-translationally, ubiquitinated with 'Lys-63'-linked polyubiquitin chains. Deubiquitination by the BRISC complex is important for the incorporation of NUMA1 into mitotic spindle poles and normal spindle pole function, probably by modulating interactions between NUMA1, dynein-dynactin complex and importin-beta.

Its subcellular location is the nucleus. It localises to the nucleoplasm. The protein resides in the nucleus matrix. The protein localises to the chromosome. It is found in the cytoplasm. Its subcellular location is the cytoskeleton. It localises to the microtubule organizing center. The protein resides in the centrosome. The protein localises to the spindle pole. It is found in the cell cortex. Its subcellular location is the cell membrane. It localises to the lateral cell membrane. The protein resides in the cytosol. Its function is as follows. Microtubule (MT)-binding protein that plays a role in the formation and maintenance of the spindle poles and the alignement and the segregation of chromosomes during mitotic cell division. Functions to tether the minus ends of MTs at the spindle poles, which is critical for the establishment and maintenance of the spindle poles. Plays a role in the establishment of the mitotic spindle orientation during metaphase and elongation during anaphase in a dynein-dynactin-dependent manner. In metaphase, part of a ternary complex composed of GPSM2 and G(i) alpha proteins, that regulates the recruitment and anchorage of the dynein-dynactin complex in the mitotic cell cortex regions situated above the two spindle poles, and hence regulates the correct oritentation of the mitotic spindle. During anaphase, mediates the recruitment and accumulation of the dynein-dynactin complex at the cell membrane of the polar cortical region through direct association with phosphatidylinositol 4,5-bisphosphate (PI(4,5)P2), and hence participates in the regulation of the spindle elongation and chromosome segregation. Also binds to other polyanionic phosphoinositides, such as phosphatidylinositol 3-phosphate (PIP), lysophosphatidic acid (LPA) and phosphatidylinositol triphosphate (PIP3), in vitro. Also required for proper orientation of the mitotic spindle during asymmetric cell divisions. Plays a role in mitotic MT aster assembly. Involved in anastral spindle assembly. Positively regulates TNKS protein localization to spindle poles in mitosis. Highly abundant component of the nuclear matrix where it may serve a non-mitotic structural role, occupies the majority of the nuclear volume. Required for epidermal differentiation and hair follicle morphogenesis. This Homo sapiens (Human) protein is Nuclear mitotic apparatus protein 1.